Reading from the N-terminus, the 410-residue chain is UDP-N-acetylglucosamine--N-acetylmuramyl-(pentapeptide) pyrophosphoryl-undecaprenol N-acetylglucosamine transferase (410 aa).

The segment at 1–35 (MKDTVSQPAGGRGATAPRPADAASPSCGSSPSADS) is disordered. Residues 14-35 (ATAPRPADAASPSCGSSPSADS) show a composition bias toward low complexity. Residues 45-47 (TAG), Asn167, Arg204, Ser238, and Gln334 each bind UDP-N-acetyl-alpha-D-glucosamine.

This sequence belongs to the glycosyltransferase 28 family. MurG subfamily.

Its subcellular location is the cell membrane. The catalysed reaction is di-trans,octa-cis-undecaprenyl diphospho-N-acetyl-alpha-D-muramoyl-L-alanyl-D-glutamyl-meso-2,6-diaminopimeloyl-D-alanyl-D-alanine + UDP-N-acetyl-alpha-D-glucosamine = di-trans,octa-cis-undecaprenyl diphospho-[N-acetyl-alpha-D-glucosaminyl-(1-&gt;4)]-N-acetyl-alpha-D-muramoyl-L-alanyl-D-glutamyl-meso-2,6-diaminopimeloyl-D-alanyl-D-alanine + UDP + H(+). The protein operates within cell wall biogenesis; peptidoglycan biosynthesis. In terms of biological role, cell wall formation. Catalyzes the transfer of a GlcNAc subunit on undecaprenyl-pyrophosphoryl-MurNAc-pentapeptide (lipid intermediate I) to form undecaprenyl-pyrophosphoryl-MurNAc-(pentapeptide)GlcNAc (lipid intermediate II). This Mycobacterium tuberculosis (strain ATCC 25177 / H37Ra) protein is UDP-N-acetylglucosamine--N-acetylmuramyl-(pentapeptide) pyrophosphoryl-undecaprenol N-acetylglucosamine transferase.